The following is a 483-amino-acid chain: METGKVTQEPKQMKFTYRFAFFFIAGSLATFVFHALTSSSSVSLFGWRLQLRQLHHLPTAHYLQTRDEFAVYSVDELNAFKEFYDKSVSDSVGASYTEAEQTNIKEALGAMRLALDMHISGKDDKAARLFEHALALAPKHPEVLLRYGEFLEHNQRNIVLADQYYFQALSISPSNSEAFANRQRTANVVQTLDERRLVSLDEKRDALSAIHEANAALRRAKKEAYFQHIYHSVGIEGNTMTLAQTRSVLETRMAVDGKSIDEHNEILGMDLAMKYINASLVQKLEITLKDILELHRRVLGHVDPIEGGEFRRTQVYVGGHVPPGPGDLALLMQRFEHWLNSEQSNSLHPVNYAALAHYKLVHIHPFIDGNGRTSRLLMNTLLMRAGYPPVIIPKQQRSQYYHFLKLANEGDIRPFVRFIADCTEKTLDLYLWATSDLPQQIPMLIQTESEGGVLAQLQSHIAQSAPEPYESGSGLDSGVNGMP.

A helical membrane pass occupies residues 20 to 42 (AFFFIAGSLATFVFHALTSSSSV). 2 TPR repeats span residues 107-140 (ALGA…APKH) and 141-175 (PEVL…SPSN). Positions 232–237 (SVGIEG) match the Inhibitory (S/T)XXXE(G/N) motif motif. ATP is bound by residues Glu236 and 317–320 (VGGH). A Fido domain is found at 286–421 (ITLKDILELH…IRPFVRFIAD (136 aa)). His364 is an active-site residue. Residues 368-375 (DGNGRTSR), 400-401 (YY), and Asn408 each bind ATP. A disordered region spans residues 464 to 483 (SAPEPYESGSGLDSGVNGMP).

It belongs to the fic family. As to quaternary structure, homodimer.

The protein localises to the membrane. The enzyme catalyses L-tyrosyl-[protein] + ATP = O-(5'-adenylyl)-L-tyrosyl-[protein] + diphosphate. The catalysed reaction is L-threonyl-[protein] + ATP = 3-O-(5'-adenylyl)-L-threonyl-[protein] + diphosphate. It catalyses the reaction 3-O-(5'-adenylyl)-L-threonyl-[protein] + H2O = L-threonyl-[protein] + AMP + H(+). The side chain of Glu-236 determines which of the two opposing activities (AMPylase or de-AMPylase) will take place. In response to endoplasmic reticulum stress, mediates de-AMPylase activity. Adenylyltransferase activity is inhibited by the inhibitory helix present at the N-terminus: Glu-236 binds ATP and competes with ATP-binding at Arg-375, thereby preventing adenylyltransferase activity. In unstressed cells, disengagement of Glu-236 promotes adenylyltransferase activity. Activation dissociates ATP-binding from Glu-236, allowing ordered binding of the entire ATP moiety with the alpha-phosphate in an orientation that is productive for accepting an incoming target hydroxyl side chain. Its function is as follows. Protein that can both mediate the addition of adenosine 5'-monophosphate (AMP) to specific residues of target proteins (AMPylation), and the removal of the same modification from target proteins (de-AMPylation), depending on the context. The side chain of Glu-236 determines which of the two opposing activities (AMPylase or de-AMPylase) will take place. Acts as a key regulator of the unfolded protein response (UPR) by mediating AMPylation or de-AMPylation of Hsc70-3/BiP. In unstressed cells, acts as an adenylyltransferase by mediating AMPylation of Hsc70-3/BiP at 'Thr-518', thereby inactivating it. In response to endoplasmic reticulum stress, acts as a phosphodiesterase by mediating removal of ATP (de-AMPylation) from Hsc70-3/BiP at 'Thr-518', leading to restore HSPA5/BiP activity. This Drosophila grimshawi (Hawaiian fruit fly) protein is Protein adenylyltransferase Fic.